A 1691-amino-acid chain; its full sequence is Collagen alpha-6(IV) chain (1691 aa).

The N-terminal stretch at 1 to 22 (MLINKLWLLLVTLCLTEELAAA) is a signal peptide. Residues 23–46 (GEKSYGKPCGGQDCSGSCQCFPEK) form a 7S domain region. The segment at 47-1463 (GARGRPGPIG…FGMPGMPGQS (1417 aa)) is triple-helical region. 5 disordered regions span residues 108–338 (IPGH…EGQK), 404–473 (GFPG…LGLK), 486–881 (GGVP…KGSP), 915–1099 (GIPG…KGRD), and 1185–1459 (THGT…MPGM). The N-linked (GlcNAc...) asparagine glycan is linked to N127. The segment covering 185–197 (PQGAPGFPGAVGP) has biased composition (low complexity). Positions 198-213 (AGPPGLQGPPGPPGPL) are enriched in pro residues. Composition is skewed to low complexity over residues 311–320 (QGPPGQQGKK) and 421–431 (GAAGLPGRDGL). Composition is skewed to pro residues over residues 432 to 443 (PGPPGPPGPPSP) and 491 to 502 (TGPPGEPGPPGP). Low complexity predominate over residues 503-512 (WGLIGLPGLK). Positions 515–517 (RGD) match the Cell attachment site motif. Residues 526–541 (PAGAPGLVGPLGPSGP) show a composition bias toward low complexity. Residues 560–562 (RGD) carry the Cell attachment site motif. Gly residues predominate over residues 588–599 (GLPGDGGQGFPG). Low complexity-rich tracts occupy residues 641 to 652 (LPGQQGLPGSKG), 660 to 703 (PGSY…GSPG), 722 to 735 (LPGFPGLPGKDGLP), and 802 to 820 (SPGTPGQVGQPGTPGSSGP). A compositionally biased stretch (basic residues) spans 842-851 (PGKKGTRGKK). A compositionally biased stretch (low complexity) spans 853-878 (PPGSIVKKGLPGLKGLPGNPGLVGLK). Positions 986–988 (RGD) match the Cell attachment site motif. Residues 1055-1068 (SPGLPGASGLPGLK) are compositionally biased toward low complexity. A compositionally biased stretch (gly residues) spans 1210-1220 (GYPGIGIGAPG). The span at 1234–1253 (PGLQGPAGLPGAPGISLPSL) shows a compositional bias: low complexity. Over residues 1275–1284 (PAGPPGPPGP) the composition is skewed to pro residues. Residues 1360–1371 (SGLQGDPGQTPT) show a composition bias toward polar residues. Low complexity-rich tracts occupy residues 1384 to 1397 (LPGIDGIPGLTGDP) and 1429 to 1459 (ALGDPGLPGLQGPPGFEGAPGQQGPFGMPGM). The Collagen IV NC1 domain maps to 1467–1691 (GYTLVKHSQS…SRCQVCMKSL (225 aa)). 6 cysteine pairs are disulfide-bonded: C1482–C1571, C1515–C1568, C1527–C1533, C1590–C1687, C1624–C1684, and C1636–C1643.

The protein belongs to the type IV collagen family. As to quaternary structure, there are six type IV collagen isoforms, alpha 1(IV)-alpha 6(IV), each of which can form a triple helix structure with 2 other chains to generate type IV collagen network. Post-translationally, prolines at the third position of the tripeptide repeating unit (G-X-Y) are hydroxylated in some or all of the chains. In terms of processing, type IV collagens contain numerous cysteine residues which are involved in inter- and intramolecular disulfide bonding. 12 of these, located in the NC1 domain, are conserved in all known type IV collagens. The trimeric structure of the NC1 domains is stabilized by covalent bonds between Lys and Met residues.

The protein resides in the secreted. It is found in the extracellular space. The protein localises to the extracellular matrix. Its subcellular location is the basement membrane. In terms of biological role, type IV collagen is the major structural component of glomerular basement membranes (GBM), forming a 'chicken-wire' meshwork together with laminins, proteoglycans and entactin/nidogen. The chain is Collagen alpha-6(IV) chain (COL4A6) from Homo sapiens (Human).